A 130-amino-acid polypeptide reads, in one-letter code: Large ribosomal subunit protein eL32 (130 aa).

Residue Ser40 is modified to Phosphoserine.

Belongs to the eukaryotic ribosomal protein eL32 family. Component of the large ribosomal subunit (LSU). Mature yeast ribosomes consist of a small (40S) and a large (60S) subunit. The 40S small subunit contains 1 molecule of ribosomal RNA (18S rRNA) and 33 different proteins (encoded by 57 genes). The large 60S subunit contains 3 rRNA molecules (25S, 5.8S and 5S rRNA) and 46 different proteins (encoded by 81 genes).

It localises to the cytoplasm. Functionally, component of the ribosome, a large ribonucleoprotein complex responsible for the synthesis of proteins in the cell. The small ribosomal subunit (SSU) binds messenger RNAs (mRNAs) and translates the encoded message by selecting cognate aminoacyl-transfer RNA (tRNA) molecules. The large subunit (LSU) contains the ribosomal catalytic site termed the peptidyl transferase center (PTC), which catalyzes the formation of peptide bonds, thereby polymerizing the amino acids delivered by tRNAs into a polypeptide chain. The nascent polypeptides leave the ribosome through a tunnel in the LSU and interact with protein factors that function in enzymatic processing, targeting, and the membrane insertion of nascent chains at the exit of the ribosomal tunnel. The chain is Large ribosomal subunit protein eL32 from Saccharomyces cerevisiae (strain ATCC 204508 / S288c) (Baker's yeast).